We begin with the raw amino-acid sequence, 389 residues long: Cytochrome b (389 aa).

Helical transmembrane passes span 36–56, 80–102, 117–137, and 183–203; these read MGSL…FLAM, WLIR…THIA, VWTV…LGYC, and FFAF…MHMM. Residues His-86 and His-100 each contribute to the heme b site. Residues His-187 and His-201 each coordinate heme b. His-206 contacts a ubiquinone. A run of 4 helical transmembrane segments spans residues 229-249, 293-313, 325-345, and 352-372; these read FVFK…LFVF, LLGV…PITD, LSKF…IIGM, and FVLI…IIVP.

The protein belongs to the cytochrome b family. Fungal cytochrome b-c1 complex contains 10 subunits; 3 respiratory subunits, 2 core proteins and 5 low-molecular weight proteins. Cytochrome b-c1 complex is a homodimer. Heme b serves as cofactor.

The protein localises to the mitochondrion inner membrane. Component of the ubiquinol-cytochrome c reductase complex (complex III or cytochrome b-c1 complex) that is part of the mitochondrial respiratory chain. The b-c1 complex mediates electron transfer from ubiquinol to cytochrome c. Contributes to the generation of a proton gradient across the mitochondrial membrane that is then used for ATP synthesis. This chain is Cytochrome b (COB), found in Vanderwaltozyma polyspora (strain ATCC 22028 / DSM 70294 / BCRC 21397 / CBS 2163 / NBRC 10782 / NRRL Y-8283 / UCD 57-17) (Kluyveromyces polysporus).